Consider the following 328-residue polypeptide: L-lactate dehydrogenase (328 aa).

Residues Val18, Glu39, Lys46, Tyr71, and 85–86 (GA) each bind NAD(+). Residues Gln88 and Arg94 each contribute to the substrate site. Residues Ser107, 124 to 126 (AAN), and Ser149 each bind NAD(+). 126 to 129 (NPVD) serves as a coordination point for substrate. 154–157 (DSAR) serves as a coordination point for substrate. The beta-D-fructose 1,6-bisphosphate site is built by Arg159 and His174. Catalysis depends on His181, which acts as the Proton acceptor. A Phosphotyrosine modification is found at Tyr226. Thr235 contributes to the substrate binding site.

The protein belongs to the LDH/MDH superfamily. LDH family. Homotetramer.

The protein resides in the cytoplasm. The catalysed reaction is (S)-lactate + NAD(+) = pyruvate + NADH + H(+). It functions in the pathway fermentation; pyruvate fermentation to lactate; (S)-lactate from pyruvate: step 1/1. Allosterically activated by fructose 1,6-bisphosphate (FBP). Its function is as follows. Catalyzes the conversion of lactate to pyruvate. The sequence is that of L-lactate dehydrogenase from Streptococcus sanguinis (strain SK36).